The chain runs to 216 residues: ATP-dependent Clp protease proteolytic subunit (216 aa).

Serine 101 acts as the Nucleophile in catalysis. Histidine 126 is a catalytic residue.

The protein belongs to the peptidase S14 family. Component of the chloroplastic Clp protease core complex.

Its subcellular location is the plastid. The protein resides in the chloroplast stroma. It catalyses the reaction Hydrolysis of proteins to small peptides in the presence of ATP and magnesium. alpha-casein is the usual test substrate. In the absence of ATP, only oligopeptides shorter than five residues are hydrolyzed (such as succinyl-Leu-Tyr-|-NHMec, and Leu-Tyr-Leu-|-Tyr-Trp, in which cleavage of the -Tyr-|-Leu- and -Tyr-|-Trp bonds also occurs).. Functionally, cleaves peptides in various proteins in a process that requires ATP hydrolysis. Has a chymotrypsin-like activity. Plays a major role in the degradation of misfolded proteins. The chain is ATP-dependent Clp protease proteolytic subunit from Saccharum hybrid (Sugarcane).